Reading from the N-terminus, the 157-residue chain is Transcription elongation factor GreA (157 aa).

A disordered region spans residues 1–24 (MDKFPMTPEGYHALDEELKRRQQE). The segment covering 12–24 (HALDEELKRRQQE) has biased composition (basic and acidic residues). Residues 53–73 (EAQSLNEGRIAELEDKLSRAE) are a coiled coil.

The protein belongs to the GreA/GreB family.

In terms of biological role, necessary for efficient RNA polymerase transcription elongation past template-encoded arresting sites. The arresting sites in DNA have the property of trapping a certain fraction of elongating RNA polymerases that pass through, resulting in locked ternary complexes. Cleavage of the nascent transcript by cleavage factors such as GreA or GreB allows the resumption of elongation from the new 3'terminus. GreA releases sequences of 2 to 3 nucleotides. The chain is Transcription elongation factor GreA from Beijerinckia indica subsp. indica (strain ATCC 9039 / DSM 1715 / NCIMB 8712).